Consider the following 398-residue polypeptide: Argininosuccinate synthase (398 aa).

8–16 (AYSGGLDTT) is a binding site for ATP. Position 87 (tyrosine 87) interacts with L-citrulline. Glycine 117 contributes to the ATP binding site. L-aspartate contacts are provided by threonine 119, asparagine 123, and aspartate 124. L-citrulline is bound at residue asparagine 123. Residues arginine 127, serine 175, glutamate 259, and tyrosine 271 each coordinate L-citrulline.

Belongs to the argininosuccinate synthase family. Type 1 subfamily. As to quaternary structure, homotetramer.

It is found in the cytoplasm. The enzyme catalyses L-citrulline + L-aspartate + ATP = 2-(N(omega)-L-arginino)succinate + AMP + diphosphate + H(+). It participates in amino-acid biosynthesis; L-arginine biosynthesis; L-arginine from L-ornithine and carbamoyl phosphate: step 2/3. This is Argininosuccinate synthase from Corynebacterium jeikeium (strain K411).